Reading from the N-terminus, the 525-residue chain is Cysteine--tRNA ligase (525 aa).

Residue C49 participates in Zn(2+) binding. The 'HIGH' region signature appears at 51 to 61 (VTVYDLCHLGH). 3 residues coordinate Zn(2+): C258, H283, and E287. Residues 315 to 319 (KMSKS) carry the 'KMSKS' region motif. Residue K318 coordinates ATP.

It belongs to the class-I aminoacyl-tRNA synthetase family. As to quaternary structure, monomer. The cofactor is Zn(2+).

Its subcellular location is the cytoplasm. It carries out the reaction tRNA(Cys) + L-cysteine + ATP = L-cysteinyl-tRNA(Cys) + AMP + diphosphate. The polypeptide is Cysteine--tRNA ligase (Synechococcus sp. (strain JA-2-3B'a(2-13)) (Cyanobacteria bacterium Yellowstone B-Prime)).